Reading from the N-terminus, the 176-residue chain is NAD(P)H-quinone oxidoreductase subunit 6, chloroplastic (176 aa).

A run of 5 helical transmembrane segments spans residues 10–30, 32–52, 63–83, 92–112, and 152–172; these read FLLV…VLLT, PIFS…FYIL, LLIY…FMNS, LWTV…VSLV, and FFLP…GTIV.

This sequence belongs to the complex I subunit 6 family. NDH is composed of at least 16 different subunits, 5 of which are encoded in the nucleus.

The protein resides in the plastid. It is found in the chloroplast thylakoid membrane. The catalysed reaction is a plastoquinone + NADH + (n+1) H(+)(in) = a plastoquinol + NAD(+) + n H(+)(out). It catalyses the reaction a plastoquinone + NADPH + (n+1) H(+)(in) = a plastoquinol + NADP(+) + n H(+)(out). Functionally, NDH shuttles electrons from NAD(P)H:plastoquinone, via FMN and iron-sulfur (Fe-S) centers, to quinones in the photosynthetic chain and possibly in a chloroplast respiratory chain. The immediate electron acceptor for the enzyme in this species is believed to be plastoquinone. Couples the redox reaction to proton translocation, and thus conserves the redox energy in a proton gradient. This chain is NAD(P)H-quinone oxidoreductase subunit 6, chloroplastic (ndhG), found in Cicer arietinum (Chickpea).